We begin with the raw amino-acid sequence, 151 residues long: Deoxyuridine 5'-triphosphate nucleotidohydrolase (151 aa).

Residues 70 to 72 (RSG), Asn83, 87 to 89 (LID), and Met97 each bind substrate.

Belongs to the dUTPase family. As to quaternary structure, homotrimer. It depends on Mg(2+) as a cofactor.

It carries out the reaction dUTP + H2O = dUMP + diphosphate + H(+). It participates in pyrimidine metabolism; dUMP biosynthesis; dUMP from dCTP (dUTP route): step 2/2. In terms of biological role, this enzyme is involved in nucleotide metabolism: it produces dUMP, the immediate precursor of thymidine nucleotides and it decreases the intracellular concentration of dUTP so that uracil cannot be incorporated into DNA. The chain is Deoxyuridine 5'-triphosphate nucleotidohydrolase from Escherichia fergusonii (strain ATCC 35469 / DSM 13698 / CCUG 18766 / IAM 14443 / JCM 21226 / LMG 7866 / NBRC 102419 / NCTC 12128 / CDC 0568-73).